The sequence spans 265 residues: Hydroxyethylthiazole kinase (265 aa).

Position 50 (M50) interacts with substrate. The ATP site is built by R125 and T171. Residue G198 coordinates substrate.

This sequence belongs to the Thz kinase family. The cofactor is Mg(2+).

It carries out the reaction 5-(2-hydroxyethyl)-4-methylthiazole + ATP = 4-methyl-5-(2-phosphooxyethyl)-thiazole + ADP + H(+). It participates in cofactor biosynthesis; thiamine diphosphate biosynthesis; 4-methyl-5-(2-phosphoethyl)-thiazole from 5-(2-hydroxyethyl)-4-methylthiazole: step 1/1. Functionally, catalyzes the phosphorylation of the hydroxyl group of 4-methyl-5-beta-hydroxyethylthiazole (THZ). This is Hydroxyethylthiazole kinase from Salmonella paratyphi B (strain ATCC BAA-1250 / SPB7).